The sequence spans 166 residues: Transcription antitermination protein NusB (166 aa).

Positions 1-18 (MISDESDRFNPRDPKPAD) are enriched in basic and acidic residues. Residues 1–28 (MISDESDRFNPRDPKPADAGKPSKSAKR) are disordered.

This sequence belongs to the NusB family.

Its function is as follows. Involved in transcription antitermination. Required for transcription of ribosomal RNA (rRNA) genes. Binds specifically to the boxA antiterminator sequence of the ribosomal RNA (rrn) operons. The chain is Transcription antitermination protein NusB from Pseudomonas putida (strain W619).